The following is a 415-amino-acid chain: uncharacterized protein (415 aa).

Positions 85, 91, 94, and 175 each coordinate [4Fe-4S] cluster. S-adenosyl-L-methionine contacts are provided by Q248, Y276, E297, and N344. The active-site Nucleophile is C371.

Belongs to the class I-like SAM-binding methyltransferase superfamily. RNA M5U methyltransferase family.

This is an uncharacterized protein from Leptospira interrogans serogroup Icterohaemorrhagiae serovar Lai (strain 56601).